The chain runs to 207 residues: C-type lectin domain family 2 member D (207 aa).

The Cytoplasmic segment spans residues 1-41 (MCVTKASLPMLSPTGSPQEVEVGKILQGKRHGTISPESCAK). A phosphoserine mark is found at serine 7 and serine 12. Residues 42 to 62 (LYCYYGVIMVLTVAVIALSVA) form a helical; Signal-anchor for type II membrane protein membrane-spanning segment. Residues 63–207 (LSATKTEQIP…LHCQTPFFPS (145 aa)) are Extracellular-facing. A disulfide bridge links cysteine 80 with cysteine 91. Positions 87-202 (VENKCFYFSE…LNSYSLHCQT (116 aa)) constitute a C-type lectin domain. N-linked (GlcNAc...) asparagine glycosylation occurs at asparagine 100.

Homodimer; disulfide-linked. N-glycosylated. Detected in fetal heart, brain, lung, chondrocytes, perichondrium and osteoblasts, and in adult splenocytes, thymocytes, lymph-node cells, osteoblasts, growth plate chondrocytes and skeletal muscle overlying the bone (at protein level). Ubiquitous. Detected in thymus, bone marrow, lung, gut, heart, skeletal muscle, ovary, spleen, ileum, liver and kidney.

It is found in the cell membrane. Its function is as follows. Receptor for KLRB1B that protects target cells against natural killer cell-mediated lysis. Inhibits osteoclast formation. Binds high molecular weight sulfated glycosaminoglycans. In Mus musculus (Mouse), this protein is C-type lectin domain family 2 member D (Clec2d).